We begin with the raw amino-acid sequence, 670 residues long: DNA ligase (670 aa).

Residues 32-36 (DAEYD), 81-82 (SL), and E110 contribute to the NAD(+) site. K112 functions as the N6-AMP-lysine intermediate in the catalytic mechanism. NAD(+) is bound by residues R133, E170, K289, and K313. Zn(2+)-binding residues include C407, C410, C425, and C431. In terms of domain architecture, BRCT spans 590–670 (ESQLSLKGQT…ALMDLLNAAN (81 aa)).

Belongs to the NAD-dependent DNA ligase family. LigA subfamily. It depends on Mg(2+) as a cofactor. Mn(2+) is required as a cofactor.

It carries out the reaction NAD(+) + (deoxyribonucleotide)n-3'-hydroxyl + 5'-phospho-(deoxyribonucleotide)m = (deoxyribonucleotide)n+m + AMP + beta-nicotinamide D-nucleotide.. DNA ligase that catalyzes the formation of phosphodiester linkages between 5'-phosphoryl and 3'-hydroxyl groups in double-stranded DNA using NAD as a coenzyme and as the energy source for the reaction. It is essential for DNA replication and repair of damaged DNA. This Shewanella frigidimarina (strain NCIMB 400) protein is DNA ligase.